Here is a 621-residue protein sequence, read N- to C-terminus: Glutamine--fructose-6-phosphate aminotransferase [isomerizing] (621 aa).

Residue cysteine 2 is the Nucleophile; for GATase activity of the active site. The Glutamine amidotransferase type-2 domain occupies 2–223 (CGIIGYVGEG…DRELGIISIS (222 aa)). 2 consecutive SIS domains span residues 289–436 (LHLE…HKFT) and 470–611 (LSKQ…IDKP). The For Fru-6P isomerization activity role is filled by lysine 616.

In terms of assembly, homodimer.

It localises to the plastid. Its subcellular location is the chloroplast. The catalysed reaction is D-fructose 6-phosphate + L-glutamine = D-glucosamine 6-phosphate + L-glutamate. Functionally, catalyzes the first step in hexosamine metabolism, converting fructose-6P into glucosamine-6P using glutamine as a nitrogen source. In Cyanidium caldarium (Red alga), this protein is Glutamine--fructose-6-phosphate aminotransferase [isomerizing].